Reading from the N-terminus, the 274-residue chain is Penicillin-insensitive murein endopeptidase (274 aa).

The signal sequence occupies residues 1–19; it reads MKNTVIALLALLASAGSLA. Intrachain disulfides connect Cys44/Cys265, Cys187/Cys235, and Cys216/Cys223. Residues His110, His113, Asp120, Asp147, His150, and His211 each coordinate Zn(2+). The interval 224–263 is disordered; the sequence is EDQAPPPPGDGCGAELQSWFEPPKPGSTPPVKKTPPPLPP. Pro residues predominate over residues 245-263; sequence PPKPGSTPPVKKTPPPLPP.

It belongs to the peptidase M74 family. As to quaternary structure, dimer. Requires Zn(2+) as cofactor.

It localises to the periplasm. Murein endopeptidase that cleaves the D-alanyl-meso-2,6-diamino-pimelyl amide bond that connects peptidoglycan strands. Likely plays a role in the removal of murein from the sacculus. The chain is Penicillin-insensitive murein endopeptidase from Klebsiella pneumoniae (strain 342).